A 125-amino-acid chain; its full sequence is Crustacean hyperglycemic hormones 5 (125 aa).

Residues 1 to 34 (MKPGNTSFNMVSFRMVWTAMMATLLVAGASSAGT) form the signal peptide. Cystine bridges form between Cys-58-Cys-94, Cys-74-Cys-90, and Cys-77-Cys-103. Val-123 is subject to Valine amide.

The protein belongs to the arthropod CHH/MIH/GIH/VIH hormone family. Produced by the medulla terminalis X-organ in the eyestalks and transported to the sinus gland where they are stored and released.

The protein localises to the secreted. Hormone found in the sinus gland of isopods and decapods which controls the blood sugar level. Has a secretagogue action over the amylase released from the midgut gland. May act as a stress hormone and may be involved in the control of molting and reproduction. In Penaeus japonicus (Kuruma prawn), this protein is Crustacean hyperglycemic hormones 5.